Here is a 291-residue protein sequence, read N- to C-terminus: Trimeric intracellular cation channel type B (291 aa).

The Lumenal segment spans residues 1-16 (MEYPWDDLTLAFSRTS). The chain crosses the membrane as a helical span at residues 17–33 (MFPFFDIAHYLVSVMAL). The Cytoplasmic segment spans residues 34 to 47 (KQRPGAVAAAWSNP). Residues 48–69 (LSSWLSAMLHCFGGGILSCILL) traverse the membrane as a helical segment. Over 70-80 (AEPPLKFLTNH) the chain is Lumenal. A helical transmembrane segment spans residues 81-99 (TNILLASSIWYIVFFCPRD). Topologically, residues 100–103 (LVSQ) are cytoplasmic. The chain crosses the membrane as a helical span at residues 104 to 122 (GYSYQPIQLLAAGMKEVTR). A 1,2-diacyl-sn-glycero-3-phospho-(1D-myo-inositol-4,5-bisphosphate) contacts are provided by Lys118 and Arg122. The Lumenal portion of the chain corresponds to 123 to 138 (TWKIVGGVAHANGYYR). A helical transmembrane segment spans residues 139–156 (NGWIVMIAVGWARGAGGA). At 157 to 179 (IITACEQLLKGDWKPEGDEWLKM) the chain is on the cytoplasmic side. Residues 180-197 (SFPCKVTLLGSIMFTFQH) traverse the membrane as a helical segment. Residues 198–206 (TRHLAISKH) are Lumenal-facing. Residues 207-225 (DLMFLYTIFLVTIKVTMMM) traverse the membrane as a helical segment. Residues 226–291 (TKDAAVTLTP…SAKRHAKKED (66 aa)) lie on the Cytoplasmic side of the membrane. Residues 254 to 291 (LSEKKAEVKPSSNGSASSASKRGTEPPSSAKRHAKKED) are disordered. Over residues 264–273 (SSNGSASSAS) the composition is skewed to low complexity.

The protein belongs to the TMEM38 family. In terms of assembly, homotrimer; conformation seems to be controled by binding to diacylglycerol (DAG).

It localises to the endoplasmic reticulum membrane. It catalyses the reaction K(+)(in) = K(+)(out). Its activity is regulated as follows. Channel activity is activated by increased cytosolic Ca(2+) levels and blocked by luminal high Ca(2+) levels. Its function is as follows. Intracellular monovalent cation channel required for maintenance of rapid intracellular calcium release. Acts as a potassium counter-ion channel that functions in synchronization with calcium release from intracellular stores. Activated by increased cytosolic Ca(2+) levels. The sequence is that of Trimeric intracellular cation channel type B (Tmem38b) from Rattus norvegicus (Rat).